A 519-amino-acid polypeptide reads, in one-letter code: ATP synthase subunit alpha 1 (519 aa).

Residue 172 to 179 (GDRQTGKT) participates in ATP binding.

This sequence belongs to the ATPase alpha/beta chains family. As to quaternary structure, F-type ATPases have 2 components, CF(1) - the catalytic core - and CF(0) - the membrane proton channel. CF(1) has five subunits: alpha(3), beta(3), gamma(1), delta(1), epsilon(1). CF(0) has three main subunits: a(1), b(2) and c(9-12). The alpha and beta chains form an alternating ring which encloses part of the gamma chain. CF(1) is attached to CF(0) by a central stalk formed by the gamma and epsilon chains, while a peripheral stalk is formed by the delta and b chains.

Its subcellular location is the cell inner membrane. The catalysed reaction is ATP + H2O + 4 H(+)(in) = ADP + phosphate + 5 H(+)(out). Its function is as follows. Produces ATP from ADP in the presence of a proton gradient across the membrane. The alpha chain is a regulatory subunit. The chain is ATP synthase subunit alpha 1 from Psychromonas ingrahamii (strain DSM 17664 / CCUG 51855 / 37).